We begin with the raw amino-acid sequence, 338 residues long: UPF0324 membrane protein TauZ (338 aa).

The next 10 helical transmembrane spans lie at 12 to 31, 36 to 55, 75 to 92, 96 to 118, 125 to 147, 162 to 184, 191 to 213, 223 to 245, 258 to 280, and 315 to 337; these read IEAAFPGFAVSALVAATAQF, YGAPAMLLALLLGLALNFLA, LGVALLGARISAGMLAAL, AIALVAAGVVLTILFALAASRLV, ALLTGGSVAICGASAAMAIAAVL, LSVTVLSTVAMVLYPMLAGFFGF, VFLGGTIHDVAQVVGAGFSIGPE, LIRVSMLAPVVLCFSLAIRARGL, PGFVIGFLVLAALNSLGLVPAAV, and AIALILAETVFLAVFVTIGLHVL.

Belongs to the UPF0324 family.

It localises to the cell membrane. This is UPF0324 membrane protein TauZ (tauZ) from Paracoccus denitrificans.